Reading from the N-terminus, the 1060-residue chain is Protein transport protein Sec16B (1060 aa).

The interval 1 to 86 is disordered; sequence MELWAPQRLP…GDWHQPVSGV (86 aa). Positions 34-224 are required for endoplasmic reticulum localization; it reads RPVPHSWHNG…PSLASESNLL (191 aa). The segment covering 41 to 50 has biased composition (basic and acidic residues); it reads HNGERFHQWQ. Positions 51–60 are enriched in polar residues; the sequence is DNRGSPQPQQ. A phosphoserine mark is found at S55, S143, S167, S188, and S191. 5 disordered regions span residues 163–236, 245–264, 711–733, 770–796, and 834–1060; these read ENQH…SSSY, APER…QADV, KVAG…GGTT, PSPQ…GTPR, and PGEN…TQPC. 2 stretches are compositionally biased toward polar residues: residues 165-195 and 213-222; these read QHSP…NSGQ and NKPSLASESN. Positions 223–236 are enriched in low complexity; sequence LLQQRESGLSSSSY. 2 positions are modified to phosphoserine: S254 and S258. The central conserved domain (CCD); required for localization to endoplasmic reticulum exit sites stretch occupies residues 271–713; sequence APMKFYIPHV…LRRQLEQKVA (443 aa). A compositionally biased stretch (polar residues) spans 837 to 847; the sequence is NTVSQETSQPP. At T858 the chain carries Phosphothreonine. 5 positions are modified to phosphoserine: S868, S871, S874, S882, and S883. Basic and acidic residues-rich tracts occupy residues 875 to 890 and 899 to 908; these read AKED…DKNS and KLGDGKEHTK. Residues 909–918 are compositionally biased toward low complexity; that stretch reads SSGFGWFSWF. The span at 930–941 shows a compositional bias: acidic residues; that stretch reads GDEDSSDSPDSE. The span at 991-1001 shows a compositional bias: gly residues; the sequence is AAAGAGVGGLS. Residues 1031–1046 are compositionally biased toward polar residues; that stretch reads NPSQVPQLPTATSLNR.

It belongs to the SEC16 family. SEC16A and SEC16B are each present in multiple copies in a heteromeric complex. Interacts with TFG. Interacts with SEC13. In terms of tissue distribution, ubiquitous.

Its subcellular location is the endoplasmic reticulum membrane. It is found in the golgi apparatus membrane. Its function is as follows. Plays a role in the organization of the endoplasmic reticulum exit sites (ERES), also known as transitional endoplasmic reticulum (tER). Required for secretory cargo traffic from the endoplasmic reticulum to the Golgi apparatus. Involved in peroxisome biogenesis. Regulates the transport of peroxisomal biogenesis factors PEX3 and PEX16 from the ER to peroxisomes. In Homo sapiens (Human), this protein is Protein transport protein Sec16B (SEC16B).